Reading from the N-terminus, the 116-residue chain is Large ribosomal subunit protein bL19 (116 aa).

This sequence belongs to the bacterial ribosomal protein bL19 family.

In terms of biological role, this protein is located at the 30S-50S ribosomal subunit interface and may play a role in the structure and function of the aminoacyl-tRNA binding site. The protein is Large ribosomal subunit protein bL19 of Clostridium novyi (strain NT).